The chain runs to 277 residues: Putative protein-disulfide oxidoreductase RC0029 (277 aa).

The first 22 residues, 1 to 22 (MRSIFIILIFLLFLSSCSEEKA), serve as a signal peptide directing secretion. Residues 34 to 80 (EHETQNNETSKATNQEAVNSENTTESIVPANDNNQTDEVSTPASQKQ) form a disordered region. The span at 39–80 (NNETSKATNQEAVNSENTTESIVPANDNNQTDEVSTPASQKQ) shows a compositional bias: polar residues. Residues 76 to 265 (ASQKQKNPAI…ISTAVDKALE (190 aa)) enclose the Thioredoxin domain. A disulfide bridge connects residues cysteine 118 and cysteine 121.

It belongs to the thioredoxin family. DsbA subfamily.

It is found in the periplasm. Functionally, may be required for disulfide bond formation in some proteins. This chain is Putative protein-disulfide oxidoreductase RC0029, found in Rickettsia conorii (strain ATCC VR-613 / Malish 7).